The sequence spans 131 residues: Large ribosomal subunit protein bL21 (131 aa).

Residues 106–116 (TIDDMPKKEAA) show a composition bias toward basic and acidic residues. Positions 106–131 (TIDDMPKKEAAPAKARRSTKKAAAAE) are disordered.

The protein belongs to the bacterial ribosomal protein bL21 family. In terms of assembly, part of the 50S ribosomal subunit. Contacts protein L20.

In terms of biological role, this protein binds to 23S rRNA in the presence of protein L20. The chain is Large ribosomal subunit protein bL21 from Koribacter versatilis (strain Ellin345).